We begin with the raw amino-acid sequence, 166 residues long: Ribosome-binding factor A (166 aa).

Residues 122–166 (LASTAEHAGDADPYRVDTEDDDDDTDGADAEARSDADVRRGPQSG) are disordered. The span at 128–138 (HAGDADPYRVD) shows a compositional bias: basic and acidic residues. Acidic residues predominate over residues 139–150 (TEDDDDDTDGAD). Over residues 151-166 (AEARSDADVRRGPQSG) the composition is skewed to basic and acidic residues.

This sequence belongs to the RbfA family. Monomer. Binds 30S ribosomal subunits, but not 50S ribosomal subunits or 70S ribosomes.

It localises to the cytoplasm. Functionally, one of several proteins that assist in the late maturation steps of the functional core of the 30S ribosomal subunit. Associates with free 30S ribosomal subunits (but not with 30S subunits that are part of 70S ribosomes or polysomes). Required for efficient processing of 16S rRNA. May interact with the 5'-terminal helix region of 16S rRNA. The protein is Ribosome-binding factor A of Saccharopolyspora erythraea (strain ATCC 11635 / DSM 40517 / JCM 4748 / NBRC 13426 / NCIMB 8594 / NRRL 2338).